A 333-amino-acid chain; its full sequence is UDP-N-acetylenolpyruvoylglucosamine reductase (333 aa).

Positions Leu12–Asp176 constitute an FAD-binding PCMH-type domain. The active site involves Arg153. Ser221 serves as the catalytic Proton donor. The active site involves Glu317.

The protein belongs to the MurB family. FAD is required as a cofactor.

It is found in the cytoplasm. The catalysed reaction is UDP-N-acetyl-alpha-D-muramate + NADP(+) = UDP-N-acetyl-3-O-(1-carboxyvinyl)-alpha-D-glucosamine + NADPH + H(+). It functions in the pathway cell wall biogenesis; peptidoglycan biosynthesis. Functionally, cell wall formation. The protein is UDP-N-acetylenolpyruvoylglucosamine reductase of Idiomarina loihiensis (strain ATCC BAA-735 / DSM 15497 / L2-TR).